The primary structure comprises 525 residues: Histidine-rich glycoprotein (525 aa).

The N-terminal stretch at 1–18 (MKVLTTALLLVTLQCSHA) is a signal peptide. One can recognise a Cystatin 1 domain in the interval 19–122 (LSPTNCDASE…ESQDLSVNGY (104 aa)). Cystine bridges form between cysteine 24-cysteine 504, cysteine 78-cysteine 89, cysteine 103-cysteine 124, cysteine 201-cysteine 414, and cysteine 216-cysteine 239. Positions 41–84 (GRRSGYVFELLRVSDAHLDRAGTATVYYLALDVIESDCWVLSTK) are interaction with ATP5F1A. N-linked (GlcNAc...) asparagine glycans are attached at residues asparagine 112, asparagine 123, and asparagine 200. The 106-residue stretch at 135 to 240 (NTKDSPVLLD…TPDSIDINCE (106 aa)) folds into the Cystatin 2 domain. The interval 273 to 447 (GSRDHHHTHK…SRKRGPGKGL (175 aa)) is disordered. Basic and acidic residues predominate over residues 293-303 (EGKDNSDRPRL). N-linked (GlcNAc...) asparagine glycosylation is found at asparagine 322 and asparagine 330. Residues 339-404 (HGHRPHGHHP…GHHPHGHHPH (66 aa)) are compositionally biased toward basic residues. The segment at 345 to 379 (GHHPHSHHPPGHHSHGHHPHGHHPHSHHSHGHHPP) is necessary for endothelial cell focal adhesions and anti-angiogenic activities. The residue at position 438 (serine 438) is a Phosphoserine.

Interacts with THBS1 (via the TSP type I repeats); the interaction blocks the antiangiogenic effect of THBS1 with CD36. Interacts with HPSE; the interaction is enhanced at acidic pH, partially inhibits binding of HPSE to cell surface receptors and modulates its enzymatic activity. Interacts (via the HRR domain) with TMP1; the interaction partially mediates the antiangiogenic properties of HRG. Interacts with kappa and lambda light chains of IgG molecules. Interacts with ATP5F1A; the interaction occurs on the surface of T-cells and alters their cell morphology in concert with CONA. Binds IgG molecules containing kappa and lambda light chains and inhibits the formation of insoluble immunoglobulin complexes. Interacts with F12; the interaction, which is enhanced in the presence of zinc ions and inhibited by heparin-binding to HRG, inhibits factor XII autoactivation and contact-initiated coagulation. Interacts with PLG (via its Kringle domains); the interaction tethers PLG to the cell surface and enhances its activation. Interacts (via the HRR domain) with TPM1; the interaction appears to contribute to the antiangiogenic properties of the HRR domain. Interacts with THBS2; the interaction blocks the antiangiogenic effect of THBS2 with CD36. Requires Zn(2+) as cofactor. Proteolytic cleavage produces several HRG fragments which are mostly disulfide-linked and, therefore, not released. Cleavage by plasmin is inhibited in the presence of heparin, zinc ions or in an acidic environment. Cleavage reduces binding of HRG to heparan sulfate, but enhances the ability of HRG to bind and tether plasminogen to the cell surface. On platelet activation, releases a 33 kDa antiangiogenic peptide which encompasses the HRR. Also cleaved in the C-terminal by plasmin. In terms of processing, N-glycosylated. Expressed in liver, blood plasma, serum and in platelets. Also present in fibrin clots, wound fluid from acute wounds and chronic leg ulcers.

It localises to the secreted. Plasma glycoprotein that binds a number of ligands such as heme, heparin, heparan sulfate, thrombospondin, plasminogen, and divalent metal ions. Binds heparin and heparin/glycosaminoglycans in a zinc-dependent manner. Binds heparan sulfate on the surface of liver, lung, kidney and heart endothelial cells. Binds to N-sulfated polysaccharide chains on the surface of liver endothelial cells. Inhibits rosette formation. Acts as an adapter protein and is implicated in regulating many processes such as immune complex and pathogen clearance, cell chemotaxis, cell adhesion, angiogenesis, coagulation and fibrinolysis. Mediates clearance of necrotic cells through enhancing the phagocytosis of necrotic cells in a heparan sulfate-dependent pathway. This process can be regulated by the presence of certain HRG ligands such as heparin and zinc ions. Binds to IgG subclasses of immunoglobins containing kappa and lambda light chains with different affinities regulating their clearance and inhibiting the formation of insoluble immune complexes. Tethers plasminogen to the cell surface. Binds T-cells and alters the cell morphology. Acts as a regulator of the vascular endothelial growth factor (VEGF) signaling pathway; inhibits endothelial cell motility by reducing VEGF-induced complex formation between PXN/paxillin and ILK/integrin-linked protein kinase and by promoting inhibition of VEGF-induced tyrosine phosphorylation of focal adhesion kinases and alpha-actinins in endothelial cells. Also plays a role in the regulation of tumor angiogenesis and tumor immune surveillance. Normalizes tumor vessels and promotes antitumor immunity by polarizing tumor-associated macrophages, leading to decreased tumor growth and metastasis. Modulates angiogenesis by blocking the CD6-mediated antiangiongenic effect of thrombospondins, THBS1 and THBS2. This Mus musculus (Mouse) protein is Histidine-rich glycoprotein (Hrg).